The chain runs to 930 residues: Protocadherin gamma-B6 (930 aa).

Residues 1–30 form the signal peptide; it reads MGGSCAQRRRAGPRQVLFPLLLPFFYPTLC. Cadherin domains are found at residues 31–133, 134–242, 243–347, 348–452, 453–562, and 570–675; these read EPIR…APQF, DKKE…PPVF, SRDE…SPEI, IITS…APVF, DQTS…APRV, and DGSA…LPDL. The Extracellular portion of the chain corresponds to 31–691; it reads EPIRYSIPEE…SDPQAELQFY (661 aa). 3 N-linked (GlcNAc...) asparagine glycosylation sites follow: Asn304, Asn419, and Asn545. A helical transmembrane segment spans residues 692–712; sequence LVVALALISVLFLLAVILAIA. Residues 713–930 lie on the Cytoplasmic side of the membrane; the sequence is LRLRRSLSPT…KKKSGKKEKK (218 aa). 2 disordered regions span residues 791 to 839 and 900 to 930; these read PHGG…WPNN and ATLT…KEKK. The segment covering 800-839 has biased composition (polar residues); it reads HPETLTSQAPPNTDWRFSQAQRPGTSGSQNGDDTGTWPNN. Over residues 920–930 the composition is skewed to basic residues; the sequence is NKKKSGKKEKK.

The protein resides in the cell membrane. Functionally, potential calcium-dependent cell-adhesion protein. May be involved in the establishment and maintenance of specific neuronal connections in the brain. This chain is Protocadherin gamma-B6 (PCDHGB6), found in Pan troglodytes (Chimpanzee).